The sequence spans 122 residues: Elsinochromes biosynthesis cluster protein HP4 (122 aa).

Its function is as follows. Part of the gene cluster that mediates the biosynthesis of elsinochromes, pigments consisting of at least four interconvertible tautomers (A, B, C and D) that have a core phenolic quinone to which various side chains are attached and which play an important role in fungal pathogenesis. The non-reducing polyketide synthase PKS1 was proposed to iteratively catalyze decarboxylation between acetyl-CoA and malonyl-CoA subunits for polyketide chain elongation. The released polyketide undergoes cyclization to form an aromatic ring, and proceeds via serial modification steps to produce the heptaketide back- bone of elsinochrome. As elsinochrome has a symmetrical structure, two identical heptaketides are fused to form a core 1,2-dihydrobenzo-perylene ring structure, which can then be successively modified to produce the various derivatives of elsinochrome. Some of these reactions may be cooperatively carried out, at least in part, by the products of RDT1, OXR1 and PKS1. PRF1, embedded within the elsinochrome cluster possibly functions to stabilize some of the biosynthetic enzymes required for elsinochrome production. As prefoldin is a hexamer containing 2 a and 4 b subunits, additional prefoldin subunits, whose coding genes may not immediately link to the elsinochrome biosynthetic gene cluster, are required to fulfill the chaperone function. In addition, no methyltransferase-coding gene exists within the biosynthetic gene cluster, even though elsinochrome has four methyl groups at positions C3, C7, C8 and C12. Apparently, the identified gene cluster does not contain the entire entourage of genes responsible for elsinochrome biosynthesis. Once elsinochrome is synthesized, it must be exported outside the fungal cells, which is probably accomplished by the ECT1 transporter, to avoid toxicity. The polypeptide is Elsinochromes biosynthesis cluster protein HP4 (Elsinoe fawcettii (Citrus scab fungus)).